The primary structure comprises 519 residues: Ribonuclease Y (519 aa).

The chain crosses the membrane as a helical span at residues L3–V23. The 61-residue stretch at T209 to L269 folds into the KH domain. The HD domain occupies V335–A428.

This sequence belongs to the RNase Y family.

The protein localises to the cell membrane. Its function is as follows. Endoribonuclease that initiates mRNA decay. This Staphylococcus epidermidis (strain ATCC 35984 / DSM 28319 / BCRC 17069 / CCUG 31568 / BM 3577 / RP62A) protein is Ribonuclease Y.